The following is a 234-amino-acid chain: Orotidine 5'-phosphate decarboxylase (234 aa).

Substrate contacts are provided by residues aspartate 10, lysine 32, 59 to 68, threonine 122, arginine 184, glutamine 193, glycine 213, and arginine 214; that span reads DLKLHDIPTT. Lysine 61 (proton donor) is an active-site residue.

The protein belongs to the OMP decarboxylase family. Type 1 subfamily. In terms of assembly, homodimer.

The catalysed reaction is orotidine 5'-phosphate + H(+) = UMP + CO2. It participates in pyrimidine metabolism; UMP biosynthesis via de novo pathway; UMP from orotate: step 2/2. Its function is as follows. Catalyzes the decarboxylation of orotidine 5'-monophosphate (OMP) to uridine 5'-monophosphate (UMP). The chain is Orotidine 5'-phosphate decarboxylase from Bacillus pumilus (strain SAFR-032).